A 494-amino-acid polypeptide reads, in one-letter code: Solute carrier family 2, facilitated glucose transporter member 3 (494 aa).

Residues 1 to 10 are Cytoplasmic-facing; sequence MGTTKVTPYL. The chain crosses the membrane as a helical span at residues 11–32; sequence IFATSVAAIGSFQFGYNTGVIN. The Extracellular portion of the chain corresponds to 33 to 64; it reads APEMIIRDFLNYTLDEKLDEPPSRLLLTNLWS. Asn43 is a glycosylation site (N-linked (GlcNAc...) asparagine). The helical transmembrane segment at 65–84 threads the bilayer; sequence LSVAIFSVGGMIGSFSVGLF. The Cytoplasmic segment spans residues 85-89; it reads NRFGR. The helical transmembrane segment at 90 to 110 threads the bilayer; sequence RNSMLIVNLLAVIGGCLMGFC. Topologically, residues 111-117 are extracellular; the sequence is KISESVE. Residues 118–141 traverse the membrane as a helical segment; it reads MLILGRLVIGVFCGLCTGFVPMYI. At 142–152 the chain is on the cytoplasmic side; the sequence is GEISPTALRGA. The chain crosses the membrane as a helical span at residues 153–173; sequence FGTLNQLGIVIGILVAQIFGL. D-glucose is bound at residue Gln158. Residues 174 to 182 lie on the Extracellular side of the membrane; it reads EIILGSEVL. A helical membrane pass occupies residues 183 to 203; sequence WPVLLGFTIIPAILQSAALPF. The Cytoplasmic segment spans residues 204 to 268; it reads CPESPRFLLI…LFRAPSYRQP (65 aa). Position 231 is a phosphothreonine (Thr231). The chain crosses the membrane as a helical span at residues 269–289; that stretch reads IIISIVLQLSQQLSGINAVFY. The segment at 276-278 is important for selectivity against fructose; it reads QLS. D-glucose is bound by residues 279–280 and Asn285; that span reads QQ. Over 290–303 the chain is Extracellular; sequence YSTGIFKDAGVKEP. A helical membrane pass occupies residues 304 to 324; it reads IYATIGAGVVNTIFTIVSVFL. Asn314 lines the D-glucose pocket. Residues 325-330 lie on the Cytoplasmic side of the membrane; sequence VERAGR. A helical transmembrane segment spans residues 331–351; the sequence is RTLHLIGLGGMALCSVLMTVS. Residues 352–362 lie on the Extracellular side of the membrane; it reads LLLKDKYDTMS. The helical transmembrane segment at 363 to 388 threads the bilayer; sequence LVCIAAILIYVAFFEIGPGPIPWFIV. Residues Glu377 and Trp385 each contribute to the D-glucose site. The Cytoplasmic segment spans residues 389-398; that stretch reads AELFSQGPRP. A helical membrane pass occupies residues 399–419; sequence AAMAVAGCSNWTSNFLVGLLF. The Extracellular portion of the chain corresponds to 420–428; the sequence is PSAAYYLGA. Residues 429 to 449 form a helical membrane-spanning segment; the sequence is YVFVIFAVFLVAFFIFTFFKV. Residues 450 to 494 are Cytoplasmic-facing; that stretch reads PETRGRTFEDITRAFEGQAAEANKLGKGPTMEMNSIQPIETTTHV. A Phosphoserine modification is found at Ser484. Thr491 carries the phosphothreonine modification.

Belongs to the major facilitator superfamily. Sugar transporter (TC 2.A.1.1) family. Glucose transporter subfamily. In terms of assembly, interacts with SMIM43; the interaction may promote SLC2A3-mediated glucose transport to meet the energy needs of mesendoderm differentiation. As to expression, detected in stomach, placenta, lung and brain.

It is found in the cell membrane. The protein localises to the perikaryon. The protein resides in the cell projection. It carries out the reaction D-glucose(out) = D-glucose(in). The enzyme catalyses D-galactose(in) = D-galactose(out). With respect to regulation, deoxyglucose transport is inhibited by D-glucose, D-galactose and maltose. Galactose transport is inhibited by D-glucose and maltose. Functionally, facilitative glucose transporter. Can also mediate the uptake of various other monosaccharides across the cell membrane. Mediates the uptake of glucose, 2-deoxyglucose, galactose, mannose, xylose and fucose, and probably also dehydroascorbate. Does not mediate fructose transport. Required for mesendoderm differentiation. The sequence is that of Solute carrier family 2, facilitated glucose transporter member 3 from Oryctolagus cuniculus (Rabbit).